A 207-amino-acid polypeptide reads, in one-letter code: Large ribosomal subunit protein uL4 (207 aa).

Positions 43–80 are disordered; that stretch reads RRRSGTAKSKGRSEVSGSTRKLYRQKGTGNARSGSVKS. Positions 69-78 are enriched in polar residues; sequence GTGNARSGSV.

It belongs to the universal ribosomal protein uL4 family. Part of the 50S ribosomal subunit.

In terms of biological role, one of the primary rRNA binding proteins, this protein initially binds near the 5'-end of the 23S rRNA. It is important during the early stages of 50S assembly. It makes multiple contacts with different domains of the 23S rRNA in the assembled 50S subunit and ribosome. Forms part of the polypeptide exit tunnel. This is Large ribosomal subunit protein uL4 from Desulforapulum autotrophicum (strain ATCC 43914 / DSM 3382 / VKM B-1955 / HRM2) (Desulfobacterium autotrophicum).